Consider the following 318-residue polypeptide: Methionyl-tRNA formyltransferase (318 aa).

110 to 113 (SLLP) contacts (6S)-5,6,7,8-tetrahydrofolate.

This sequence belongs to the Fmt family.

It catalyses the reaction L-methionyl-tRNA(fMet) + (6R)-10-formyltetrahydrofolate = N-formyl-L-methionyl-tRNA(fMet) + (6S)-5,6,7,8-tetrahydrofolate + H(+). Its function is as follows. Attaches a formyl group to the free amino group of methionyl-tRNA(fMet). The formyl group appears to play a dual role in the initiator identity of N-formylmethionyl-tRNA by promoting its recognition by IF2 and preventing the misappropriation of this tRNA by the elongation apparatus. In Geobacillus sp. (strain WCH70), this protein is Methionyl-tRNA formyltransferase.